We begin with the raw amino-acid sequence, 467 residues long: Fumarate hydratase class II (467 aa).

Substrate contacts are provided by residues 99 to 101 (SGT), 130 to 133 (HPND), 140 to 142 (SSN), and Thr188. His189 acts as the Proton donor/acceptor in catalysis. Residue Ser319 is part of the active site. Residues Ser320 and 325 to 327 (KVN) each bind substrate.

Belongs to the class-II fumarase/aspartase family. Fumarase subfamily. As to quaternary structure, homotetramer.

It is found in the cytoplasm. It catalyses the reaction (S)-malate = fumarate + H2O. It participates in carbohydrate metabolism; tricarboxylic acid cycle; (S)-malate from fumarate: step 1/1. Its function is as follows. Involved in the TCA cycle. Catalyzes the stereospecific interconversion of fumarate to L-malate. The protein is Fumarate hydratase class II of Thermosynechococcus vestitus (strain NIES-2133 / IAM M-273 / BP-1).